A 1237-amino-acid polypeptide reads, in one-letter code: Anion exchange protein 2 (1237 aa).

A disordered region spans residues 1–238 (MSSAPRRPAS…YNLQERRRIG (238 aa)). Topologically, residues 1–703 (MSSAPRRPAS…SDFRDALDPQ (703 aa)) are cytoplasmic. 2 stretches are compositionally biased toward basic and acidic residues: residues 38–48 (LRTLGVERFEE) and 57–74 (GGEE…EYHR). Composition is skewed to basic residues over residues 75–84 (QSSHHIHHPL) and 93–109 (RRRK…RRRP). Phosphoserine occurs at positions 112, 131, 144, 170, 172, and 239. The span at 119–132 (TIEEGEEDEEEASE) shows a compositional bias: acidic residues. Position 253 is a phosphothreonine (T253). K270 is subject to N6-methyllysine. Residues 285-316 (VRKNAKGSTQAAREGREPGPTPRARPRAPHKP) are disordered. Phosphoserine is present on S439. Residues 445 to 466 (SLLGHHHAQGTESDPHVTEPLI) are disordered. Transmembrane regions (helical) follow at residues 704 to 727 (CLAA…GLLG), 733 to 770 (LIGV…LLVF), 790 to 812 (VWIG…SFLV), and 822 to 843 (IFAF…IKIF). Positions 704 to 1237 (CLAAVIFIYF…DEYNEMPMPV (534 aa)) are membrane (anion exchange). The Extracellular segment spans residues 844–896 (QEHPLHGCSGSNDSEAGSSSSSNMTWATTILVPDNSSASGQSGQEKPRGQPNT). Residues N855, N866, and N878 are each glycosylated (N-linked (GlcNAc...) asparagine). A helical transmembrane segment spans residues 897-914 (ALLSLVLMAGTFFIAFFL). Over 915–929 (RKFKNSRFFPGRIRR) the chain is Cytoplasmic. The next 5 membrane-spanning stretches (helical) occupy residues 930-950 (VIGD…DYSI), 984-1006 (PFPV…LIFM), 1032-1053 (LLLI…LAAA), 1087-1132 (VTGL…IQFY), and 1159-1195 (MHLF…TVPL). Residue C1169 is the site of S-palmitoyl cysteine attachment.

This sequence belongs to the anion exchanger (TC 2.A.31) family. Expressed in the choroid plexus epithelium (at protein level). Expressed in the parotid gland and sublingual salivary gland acinar cells (at protein level). In terms of tissue distribution, widely expressed at similar levels in all tissues examined. Expressed in the testis. As to expression, predominantly expressed in stomach although they are also detected at lower levels in other tissues. Expressed in the testis. Stomach-specific. In terms of tissue distribution, expressed at slightly higher levels in lung and stomach than in other tissues.

It localises to the apical cell membrane. The protein resides in the basolateral cell membrane. The catalysed reaction is hydrogencarbonate(in) + chloride(out) = hydrogencarbonate(out) + chloride(in). Its activity is regulated as follows. Inhibited by 4,4'-diisothiocyanatostilbene-2,2'-disulfonic acid (DIDS) and acetazolamide. Muscarinic receptor stimulation enhances activity through a Ca(2+)-dependent mechanism. In terms of biological role, sodium-independent anion exchanger which mediates the electroneutral exchange of chloride for bicarbonate ions across the cell membrane. Plays an important role in osteoclast differentiation and function. Regulates bone resorption and calpain-dependent actin cytoskeleton organization in osteoclasts via anion exchange-dependent control of pH. Essential for intracellular pH regulation in CD8(+) T-cells upon CD3 stimulation, modulating CD8(+) T-cell responses. Plays a critical role in male fertility and spermiogenesis. This is Anion exchange protein 2 (Slc4a2) from Mus musculus (Mouse).